The primary structure comprises 375 residues: Metal tolerance protein B (375 aa).

Residues 1–57 lie on the Cytoplasmic side of the membrane; it reads MELEQICILKPDDEEEMESPSPSKTEENLGVVPLSCAFTRQEHCVSETKEREESTRR. The chain crosses the membrane as a helical span at residues 58–78; sequence LSSLIFLYLIVMSVQIVGGFK. Residues 79–84 are Vacuolar-facing; that stretch reads ANSLAV. The helical transmembrane segment at 85–105 threads the bilayer; that stretch reads MTDAAHLLSDVAGLCVSLLAI. Over 106-122 the chain is Cytoplasmic; it reads KVSSWEANPRNSFGFKR. Residues 123-143 traverse the membrane as a helical segment; sequence LEVLAAFLSVQLIWLVSGVII. At 144–160 the chain is on the vacuolar side; sequence HEAIQRLLSRSREVNGE. Residues 161-181 traverse the membrane as a helical segment; sequence IMFGISAFGFFMNLVMVLWLG. The tract at residues 182-206 is required for zinc-binding; that stretch reads HNHSHHHHDHHHHHHNHKHQHQHHH. The Cytoplasmic segment spans residues 182 to 240; it reads HNHSHHHHDHHHHHHNHKHQHQHHHKEVVAEEEEEEMNPLKGEKSSSKEMNINIQGAYL. Residues 241 to 261 traverse the membrane as a helical segment; sequence HAMADMIQSLGVMIGGGIIWV. The Vacuolar segment spans residues 262–264; it reads KPK. A helical membrane pass occupies residues 265–285; the sequence is WVLVDLICTLVFSAFALAATL. Over 286-375 the chain is Cytoplasmic; the sequence is PILKNIFGIL…YHATVQVESE (90 aa).

This sequence belongs to the cation diffusion facilitator (CDF) transporter (TC 2.A.4) family. SLC30A subfamily.

It is found in the vacuole membrane. Functionally, involved in sequestration of excess zinc in the cytoplasm into vacuoles to maintain zinc homeostasis. The sequence is that of Metal tolerance protein B (MTPB) from Arabidopsis thaliana (Mouse-ear cress).